Reading from the N-terminus, the 335-residue chain is Glucokinase (335 aa).

11–16 contacts ATP; the sequence is ADIGGT.

This sequence belongs to the bacterial glucokinase family.

The protein resides in the cytoplasm. It catalyses the reaction D-glucose + ATP = D-glucose 6-phosphate + ADP + H(+). The chain is Glucokinase from Xanthomonas campestris pv. campestris (strain B100).